The sequence spans 445 residues: Phosphoglucosamine mutase (445 aa).

Residue S101 is the Phosphoserine intermediate of the active site. Mg(2+) is bound by residues S101, D240, D242, and D244. Residue S101 is modified to Phosphoserine.

It belongs to the phosphohexose mutase family. Mg(2+) serves as cofactor. In terms of processing, activated by phosphorylation.

It catalyses the reaction alpha-D-glucosamine 1-phosphate = D-glucosamine 6-phosphate. Functionally, catalyzes the conversion of glucosamine-6-phosphate to glucosamine-1-phosphate. The polypeptide is Phosphoglucosamine mutase (Pseudomonas aeruginosa (strain UCBPP-PA14)).